Consider the following 498-residue polypeptide: uncharacterized protein (498 aa).

3 disordered regions span residues M1–K48, N99–K134, and N190–N209. Positions E35–Q44 are enriched in polar residues. Residues N99 to R110 show a composition bias toward basic and acidic residues. Over residues T111–K126 the composition is skewed to polar residues.

This is an uncharacterized protein from Schizosaccharomyces pombe (strain 972 / ATCC 24843) (Fission yeast).